The chain runs to 382 residues: uncharacterized protein (382 aa).

The next 11 membrane-spanning stretches (helical) occupy residues 8–28, 41–61, 73–93, 94–114, 133–153, 157–177, 208–228, 235–255, 274–294, 325–345, and 349–369; these read VLLLLCGLLLFTISIAVLNTL, WQVGMVSSSYFTGNLVGTLIA, SYHCSCILFALATCGLMLTVD, FWSWLGWRFLAGIACALIWVI, AAYMMVYYLGTVIGQLLLGIV, LLSVIPWVGALVITAMLPLLF, GCIISGVLLGSLYGLLPLYLS, ASVGGWMALLVSSGIIGQWPM, VVILGSVAILGNYAMAPALFI, ALLMSYTLGSLAGPTMTSLLM, and SDNLLFIMIAGVAFVYLMMLL.

Belongs to the major facilitator superfamily. YcaD (TC 2.A.1.26) family.

Its subcellular location is the cell inner membrane. This is an uncharacterized protein from Yersinia pseudotuberculosis serotype IB (strain PB1/+).